We begin with the raw amino-acid sequence, 120 residues long: UPF0231 protein YacL (120 aa).

This sequence belongs to the UPF0231 family.

The sequence is that of UPF0231 protein YacL from Escherichia coli (strain SMS-3-5 / SECEC).